The chain runs to 222 residues: Coiled-coil domain-containing protein 43 homolog (222 aa).

Residues 80–111 (ETENKLKLTNLKLEQELKIKETTQSEINEEEK) are a coiled coil. Disordered stretches follow at residues 102–126 (TQSE…EQKK) and 159–222 (EDNK…KRRL). Composition is skewed to basic and acidic residues over residues 112–126 (YENP…EQKK) and 175–212 (RIAD…EEKK). Residues 168-222 (GENLNAKRIADEEKAKREKSKIEHQKKVQRDKEALEKQKRDEEKKKTVKKEKRRL) are a coiled coil. Positions 213–222 (KTVKKEKRRL) are enriched in basic residues.

This sequence belongs to the CCDC43 family.

In Dictyostelium discoideum (Social amoeba), this protein is Coiled-coil domain-containing protein 43 homolog.